Here is a 348-residue protein sequence, read N- to C-terminus: Tetraacyldisaccharide 4'-kinase (348 aa).

65 to 72 (VAGGAGKT) provides a ligand contact to ATP. The interval 89-117 (PGIVSRGHGSREREARPVSADSTAQSVGD) is disordered.

The protein belongs to the LpxK family.

It carries out the reaction a lipid A disaccharide + ATP = a lipid IVA + ADP + H(+). The protein operates within glycolipid biosynthesis; lipid IV(A) biosynthesis; lipid IV(A) from (3R)-3-hydroxytetradecanoyl-[acyl-carrier-protein] and UDP-N-acetyl-alpha-D-glucosamine: step 6/6. Transfers the gamma-phosphate of ATP to the 4'-position of a tetraacyldisaccharide 1-phosphate intermediate (termed DS-1-P) to form tetraacyldisaccharide 1,4'-bis-phosphate (lipid IVA). In Leptothrix cholodnii (strain ATCC 51168 / LMG 8142 / SP-6) (Leptothrix discophora (strain SP-6)), this protein is Tetraacyldisaccharide 4'-kinase.